The chain runs to 432 residues: MRKLRLVRIPRHLIIAASSWLSKIIIAGVQLVSVKFLLEILGEESYAVFTLLTGLLVWFSIADIGIGSSLQNYISELKADRKSYDAYIKAAVHILFASLIILSSTLFFLSDKLSSLYLTSFSDELKNNSGSYFFIASILFIFIGVGSVVYKILFAELLGWKANIINALSYLLGFLDVVAIHYLMPDSSITFALVALYAPVAILPIIYISFRYIYVLKAKVNFNTYKLLLSRSSGFLIFSSLSIIVLQTDYIVMSQKLSAADIIKYTVTMKIFGLMFFIYTAVLQALWPVCAELRVKMQWRKLHRIIFLNIIGGVFFIGLGTLFIYVLKDYIYSIIANGIDYNISGVVFVLLAVYFSIRVWCDTFAMLLQSMNQLKILWLIVPCQALIGGVTQWYFAEHYGIVGILYGLILSFSLTVFWGLPVYYMYKSKRLA.

Helical transmembrane passes span 14–34, 47–67, 90–110, 134–154, 164–184, 189–209, 234–254, 271–291, 305–325, 334–354, 376–396, and 400–420; these read IIAASSWLSKIIIAGVQLVSV, AVFTLLTGLLVWFSIADIGIG, AAVHILFASLIILSSTLFFLS, FIASILFIFIGVGSVVYKILF, IINALSYLLGFLDVVAIHYLM, ITFALVALYAPVAILPIIYIS, GFLIFSSLSIIVLQTDYIVMS, IFGLMFFIYTAVLQALWPVCA, IIFLNIIGGVFFIGLGTLFIY, IIANGIDYNISGVVFVLLAVY, ILWLIVPCQALIGGVTQWYFA, and GIVGILYGLILSFSLTVFWGL.

It is found in the cell inner membrane. Its pathway is bacterial outer membrane biogenesis; LPS O-antigen biosynthesis. In terms of biological role, may be involved in the translocation process of the nascent O-polysaccharide molecules and/or its ligation to lipid A core units. This Salmonella typhi protein is Putative O-antigen transporter (rfbX).